Consider the following 474-residue polypeptide: MVQLNPNFINTISQELPAHLSMDEFIAACARPLRRSIRVNTLKISSEDFKRLMQPKGWTFEPIPWCKDGFWISYDEEEQLGNALEHIQGLFYIQEASSMLPPTALFTPNADWQCVLDLAAAPGSKTTQMAALMNNQGLLVANEYSASRVKVLHANVLRMGASHCALTHFDGRVFGEYLYESFDAVLIDAPCGGEGTVRKDVDALKSWSLDEVIAISETQKALIESAFLALKPGGSLVYSTCTLNRHENQGVCEYLQQTYGNAVQFESLSQLFDGADKATTPEGFLHVWPQIYDSEGFFVAKLTKTRSVPRLQLEPKLQKNFPFTEASPKQAKAIQAYFADDLGIELPDELIMVRDDEFWLFPREFTDFIGKMRFQRIGLKLADHSKHGFKVRHEAVIALANTQANIIEINDEQAKEYLMGRDIALDTATKAQGEIIVCYGGAPLGMAKHLGNKLKNNLPRDLVKDKVLLLPSQA.

S-adenosyl-L-methionine-binding positions include 119–125, E143, D170, and D188; that span reads AAAPGSK. Residue C241 is the Nucleophile of the active site.

This sequence belongs to the class I-like SAM-binding methyltransferase superfamily. RsmB/NOP family.

The protein resides in the cytoplasm. The enzyme catalyses cytidine(1407) in 16S rRNA + S-adenosyl-L-methionine = 5-methylcytidine(1407) in 16S rRNA + S-adenosyl-L-homocysteine + H(+). Its function is as follows. Specifically methylates the cytosine at position 1407 (m5C1407) of 16S rRNA. This chain is Ribosomal RNA small subunit methyltransferase F, found in Shewanella oneidensis (strain ATCC 700550 / JCM 31522 / CIP 106686 / LMG 19005 / NCIMB 14063 / MR-1).